The sequence spans 158 residues: Cyclic pyranopterin monophosphate synthase (158 aa).

Residues 76–78 (LCH) and 114–115 (ME) contribute to the substrate site. Asp-129 is a catalytic residue.

This sequence belongs to the MoaC family. In terms of assembly, homohexamer; trimer of dimers.

It catalyses the reaction (8S)-3',8-cyclo-7,8-dihydroguanosine 5'-triphosphate = cyclic pyranopterin phosphate + diphosphate. The protein operates within cofactor biosynthesis; molybdopterin biosynthesis. Catalyzes the conversion of (8S)-3',8-cyclo-7,8-dihydroguanosine 5'-triphosphate to cyclic pyranopterin monophosphate (cPMP). The protein is Cyclic pyranopterin monophosphate synthase of Shewanella baltica (strain OS155 / ATCC BAA-1091).